The following is a 106-amino-acid chain: ATP-dependent Clp protease adapter protein ClpS (106 aa).

Belongs to the ClpS family. In terms of assembly, binds to the N-terminal domain of the chaperone ClpA.

In terms of biological role, involved in the modulation of the specificity of the ClpAP-mediated ATP-dependent protein degradation. The polypeptide is ATP-dependent Clp protease adapter protein ClpS (Serratia proteamaculans (strain 568)).